Consider the following 210-residue polypeptide: Small ribosomal subunit protein uS3 (210 aa).

The KH type-2 domain maps to 17–86 (IDEFLEKELR…NPQIEVEEIK (70 aa)).

This sequence belongs to the universal ribosomal protein uS3 family. In terms of assembly, part of the 30S ribosomal subunit.

Binds the lower part of the 30S subunit head. This chain is Small ribosomal subunit protein uS3, found in Pyrococcus furiosus (strain ATCC 43587 / DSM 3638 / JCM 8422 / Vc1).